Here is a 379-residue protein sequence, read N- to C-terminus: Spermidine/putrescine import ATP-binding protein PotA (379 aa).

Positions 10 to 240 constitute an ABC transporter domain; the sequence is VTIDQVSKAY…PATDFVAKFI (231 aa). Residue 42–49 coordinates ATP; sequence GPSGCGKT.

Belongs to the ABC transporter superfamily. Spermidine/putrescine importer (TC 3.A.1.11.1) family. As to quaternary structure, the complex is composed of two ATP-binding proteins (PotA), two transmembrane proteins (PotB and PotC) and a solute-binding protein (PotD).

Its subcellular location is the cell inner membrane. The enzyme catalyses ATP + H2O + polyamine-[polyamine-binding protein]Side 1 = ADP + phosphate + polyamineSide 2 + [polyamine-binding protein]Side 1.. Functionally, part of the ABC transporter complex PotABCD involved in spermidine/putrescine import. Responsible for energy coupling to the transport system. In Treponema pallidum (strain Nichols), this protein is Spermidine/putrescine import ATP-binding protein PotA.